A 167-amino-acid polypeptide reads, in one-letter code: UPF0179 protein Pars_2336 (167 aa).

It belongs to the UPF0179 family.

The chain is UPF0179 protein Pars_2336 from Pyrobaculum arsenaticum (strain DSM 13514 / JCM 11321 / PZ6).